The primary structure comprises 264 residues: Thymidylate synthase (264 aa).

A dUMP-binding site is contributed by Arg-21. A (6R)-5,10-methylene-5,6,7,8-tetrahydrofolate-binding site is contributed by His-51. 126-127 lines the dUMP pocket; that stretch reads RR. Residue Cys-146 is the Nucleophile of the active site. Residues 166-169, Asn-177, and 207-209 contribute to the dUMP site; these read RSCD and HLY. Asp-169 is a (6R)-5,10-methylene-5,6,7,8-tetrahydrofolate binding site. (6R)-5,10-methylene-5,6,7,8-tetrahydrofolate is bound at residue Ala-263.

This sequence belongs to the thymidylate synthase family. Bacterial-type ThyA subfamily. In terms of assembly, homodimer.

It localises to the cytoplasm. It catalyses the reaction dUMP + (6R)-5,10-methylene-5,6,7,8-tetrahydrofolate = 7,8-dihydrofolate + dTMP. It functions in the pathway pyrimidine metabolism; dTTP biosynthesis. Functionally, catalyzes the reductive methylation of 2'-deoxyuridine-5'-monophosphate (dUMP) to 2'-deoxythymidine-5'-monophosphate (dTMP) while utilizing 5,10-methylenetetrahydrofolate (mTHF) as the methyl donor and reductant in the reaction, yielding dihydrofolate (DHF) as a by-product. This enzymatic reaction provides an intracellular de novo source of dTMP, an essential precursor for DNA biosynthesis. The polypeptide is Thymidylate synthase (Xenorhabdus nematophila (strain ATCC 19061 / DSM 3370 / CCUG 14189 / LMG 1036 / NCIMB 9965 / AN6)).